A 512-amino-acid chain; its full sequence is 2-isopropylmalate synthase (512 aa).

The region spanning 5–268 is the Pyruvate carboxyltransferase domain; that stretch reads LIIFDTTLRD…DIGIDTQQIL (264 aa). Positions 14, 202, 204, and 239 each coordinate Mn(2+). Positions 394–512 are regulatory domain; that stretch reads GFVSLSQHSE…SKADRVAAQG (119 aa).

Belongs to the alpha-IPM synthase/homocitrate synthase family. LeuA type 1 subfamily. In terms of assembly, homodimer. Requires Mn(2+) as cofactor.

The protein localises to the cytoplasm. It carries out the reaction 3-methyl-2-oxobutanoate + acetyl-CoA + H2O = (2S)-2-isopropylmalate + CoA + H(+). It participates in amino-acid biosynthesis; L-leucine biosynthesis; L-leucine from 3-methyl-2-oxobutanoate: step 1/4. Its function is as follows. Catalyzes the condensation of the acetyl group of acetyl-CoA with 3-methyl-2-oxobutanoate (2-ketoisovalerate) to form 3-carboxy-3-hydroxy-4-methylpentanoate (2-isopropylmalate). The polypeptide is 2-isopropylmalate synthase (Polaromonas naphthalenivorans (strain CJ2)).